A 132-amino-acid chain; its full sequence is Small ribosomal subunit protein uS11 (132 aa).

This sequence belongs to the universal ribosomal protein uS11 family. In terms of assembly, part of the 30S ribosomal subunit. Interacts with proteins S7 and S18. Binds to IF-3.

Its function is as follows. Located on the platform of the 30S subunit, it bridges several disparate RNA helices of the 16S rRNA. Forms part of the Shine-Dalgarno cleft in the 70S ribosome. The chain is Small ribosomal subunit protein uS11 from Chlamydia caviae (strain ATCC VR-813 / DSM 19441 / 03DC25 / GPIC) (Chlamydophila caviae).